A 102-amino-acid chain; its full sequence is uncharacterized protein (102 aa).

The segment at 79 to 102 (AELLHPSPAPMPPATHGRSAAPCS) is disordered.

This is an uncharacterized protein from Homo sapiens (Human).